A 432-amino-acid polypeptide reads, in one-letter code: Adenylosuccinate synthetase (432 aa).

GTP is bound by residues 12–18 and 40–42; these read GDEGKGK and GHT. The active-site Proton acceptor is the Asp13. Mg(2+) contacts are provided by Asp13 and Gly40. IMP is bound by residues 13 to 16, 38 to 41, Thr130, Arg144, Gln225, Thr240, and Arg304; these read DEGK and NAGH. Catalysis depends on His41, which acts as the Proton donor. 300–306 provides a ligand contact to substrate; sequence ATTGRPR. Residues Arg306, 332–334, and 414–416 contribute to the GTP site; these read KLD and SVG.

This sequence belongs to the adenylosuccinate synthetase family. In terms of assembly, homodimer. Mg(2+) is required as a cofactor.

It is found in the cytoplasm. It catalyses the reaction IMP + L-aspartate + GTP = N(6)-(1,2-dicarboxyethyl)-AMP + GDP + phosphate + 2 H(+). Its pathway is purine metabolism; AMP biosynthesis via de novo pathway; AMP from IMP: step 1/2. Plays an important role in the de novo pathway of purine nucleotide biosynthesis. Catalyzes the first committed step in the biosynthesis of AMP from IMP. This Anaeromyxobacter sp. (strain K) protein is Adenylosuccinate synthetase.